The primary structure comprises 122 residues: Small ribosomal subunit protein uS13 (122 aa).

The segment at 92–122 (HRMGLPVRGQRTKTNARTRKGPSKPVSGKKK) is disordered. The span at 101 to 122 (QRTKTNARTRKGPSKPVSGKKK) shows a compositional bias: basic residues.

This sequence belongs to the universal ribosomal protein uS13 family. As to quaternary structure, part of the 30S ribosomal subunit. Forms a loose heterodimer with protein S19. Forms two bridges to the 50S subunit in the 70S ribosome.

In terms of biological role, located at the top of the head of the 30S subunit, it contacts several helices of the 16S rRNA. In the 70S ribosome it contacts the 23S rRNA (bridge B1a) and protein L5 of the 50S subunit (bridge B1b), connecting the 2 subunits; these bridges are implicated in subunit movement. Contacts the tRNAs in the A and P-sites. The sequence is that of Small ribosomal subunit protein uS13 from Ruminiclostridium cellulolyticum (strain ATCC 35319 / DSM 5812 / JCM 6584 / H10) (Clostridium cellulolyticum).